The chain runs to 753 residues: Elongin-A2 (753 aa).

The 76-residue stretch at 5-80 folds into the TFIIS N-terminal domain; it reads STTLHAVEKL…ARWKKLVLVD (76 aa). 3 disordered regions span residues 80–245, 261–453, and 477–497; these read DRNT…DWHS, ETPR…GPKT, and LSDSDSMTSQAKPEALSSPKF. Composition is skewed to basic and acidic residues over residues 147 to 157 and 271 to 285; these read HSREPRAERKC and ARDRQPSDFKTDKEG. The span at 306 to 317 shows a compositional bias: basic residues; the sequence is KRPQHSHSNKKR. The segment covering 333 to 348 has biased composition (basic and acidic residues); it reads SPEEKEQLSNDRETQE. Residues 366-377 show a composition bias toward acidic residues; the sequence is EVEEVDMAEEFE. Basic and acidic residues predominate over residues 409 to 428; it reads DKQRKANESKGTRESWDSAK. Positions 500–659 are activation domain; sequence EAAFPGRRVN…TPYDTSRRQE (160 aa). A BC-box region spans residues 528–537; that stretch reads TLRQQCAQVL. Residues 528 to 537 are interacting with Elongin BC complex; it reads TLRQQCAQVL. Positions 650–735 are disordered; sequence TPYDTSRRQE…KTRKQAAKKV (86 aa). Residues 654–663 show a composition bias toward basic and acidic residues; sequence TSRRQEKSAG. Low complexity predominate over residues 680-700; it reads GSSHTPSSQSSSGGGRDSSSS.

As to quaternary structure, heterotrimer of an A (ELOA, ELOA2 or ELOA3P), ELOB and ELOC subunit. Specifically expressed in testis.

It is found in the nucleus. Functionally, SIII, also known as elongin, is a general transcription elongation factor that increases the RNA polymerase II transcription elongation past template-encoded arresting sites. Subunit A2 is transcriptionally active but its transcription activity is not enhanced by binding to the dimeric complex of the SIII regulatory subunits B and C (elongin BC complex). The sequence is that of Elongin-A2 from Homo sapiens (Human).